The chain runs to 268 residues: Virulence plasmid ParA family protein pGP5-D (268 aa).

13–20 (FKGGTGKT) contacts ATP.

This sequence belongs to the ParA family.

This chain is Virulence plasmid ParA family protein pGP5-D, found in Chlamydia muridarum (strain MoPn / Nigg).